A 630-amino-acid polypeptide reads, in one-letter code: L-amino-acid oxidase (630 aa).

The signal sequence occupies residues 1–21 (MAGLALRLVLAATLLGLAGSL). C35 and C198 form a disulfide bridge. N53 carries an N-linked (GlcNAc...) asparagine glycan. Residues 68 to 69 (VA), 88 to 89 (EA), R96, and 112 to 115 (GAMR) each bind FAD. R115 contributes to the substrate binding site. N-linked (GlcNAc...) asparagine glycosylation is found at N133 and N219. V286 contributes to the FAD binding site. Y395 lines the substrate pocket. Residues E479 and 486 to 491 (GWVETA) each bind FAD. Position 486-487 (486-487 (GW)) interacts with substrate. A disordered region spans residues 532–554 (GERPEEQQAREEVSPDEQEPSHK).

The protein belongs to the flavin monoamine oxidase family. FIG1 subfamily. The cofactor is FAD. Primarily found in immune tissues. As to expression, primarily found in immune tissues, mostly in B-lymphocytes. In terms of tissue distribution, restricted to the testis, predominantly in Sertoli cells at the periphery of the ducts, and the brain, including Purkinje cells, hippocampus and mitral cells in the olfactory bulb. No isoform 2 expression in fetal tissues.

The protein resides in the secreted. The protein localises to the cytoplasmic vesicle. It is found in the secretory vesicle. Its subcellular location is the acrosome. It localises to the lysosome. It carries out the reaction an L-alpha-amino acid + O2 + H2O = a 2-oxocarboxylate + H2O2 + NH4(+). The catalysed reaction is L-tryptophan + O2 + H2O = indole-3-pyruvate + H2O2 + NH4(+). The enzyme catalyses L-phenylalanine + O2 + H2O = 3-phenylpyruvate + H2O2 + NH4(+). It catalyses the reaction L-tyrosine + O2 + H2O = 3-(4-hydroxyphenyl)pyruvate + H2O2 + NH4(+). It carries out the reaction L-arginine + O2 + H2O = 5-guanidino-2-oxopentanoate + H2O2 + NH4(+). Its pathway is amino-acid degradation; L-tryptophan degradation via pyruvate pathway. In terms of biological role, secreted L-amino-acid oxidase that acts as a key immunoregulator. Has preference for L-aromatic amino acids: converts phenylalanine (Phe), tyrosine (Tyr) and tryptophan (Trp) to phenylpyruvic acid (PP), hydroxyphenylpyruvic acid (HPP), and indole-3-pyruvic acid (I3P), respectively. Also has weak L-arginine oxidase activity. Acts as a negative regulator of anti-tumor immunity by mediating Trp degradation via an indole pyruvate pathway that activates the transcription factor AHR. IL4I1-mediated Trp catabolism generates I3P, giving rise to indole metabolites (indole-3-acetic acid (IAA) and indole-3-aldehyde (I3A)) and kynurenic acid, which act as ligands for AHR, a ligand-activated transcription factor that plays important roles in immunity and cancer. AHR activation by indoles following IL4I1-mediated Trp degradation enhances tumor progression by promoting cancer cell motility and suppressing adaptive immunity. Also has an immunoregulatory function in some immune cell, probably by mediating Trp degradation and promoting downstream AHR activation: inhibits T-cell activation and proliferation, promotes the differentiation of naive CD4(+) T-cells into FOXP3(+) regulatory T-cells (Treg) and regulates the development and function of B-cells. Also regulates M2 macrophage polarization by inhibiting T-cell activation. Also has antibacterial properties by inhibiting growth of Gram negative and Gram positive bacteria through the production of NH4(+) and H2O2. The protein is L-amino-acid oxidase of Mus musculus (Mouse).